The chain runs to 170 residues: Ureidoglycolate lyase (170 aa).

The protein belongs to the ureidoglycolate lyase family. Homodimer. It depends on Ni(2+) as a cofactor.

The enzyme catalyses (S)-ureidoglycolate = urea + glyoxylate. The protein operates within nitrogen metabolism; (S)-allantoin degradation. Catalyzes the catabolism of the allantoin degradation intermediate (S)-ureidoglycolate, generating urea and glyoxylate. Involved in the utilization of allantoin as nitrogen source. The polypeptide is Ureidoglycolate lyase (Pseudomonas syringae pv. tomato (strain ATCC BAA-871 / DC3000)).